The sequence spans 960 residues: Gamma-aminobutyric acid type B receptor subunit 1 (960 aa).

The N-terminal stretch at 1 to 19 (MLLLLLVPLFLRPLGAGGA) is a signal peptide. At 20–590 (QTPNATSEGC…KTFRFLSQKL (571 aa)) the chain is on the extracellular side. 2 N-linked (GlcNAc...) asparagine glycosylation sites follow: asparagine 23 and asparagine 83. 2 Sushi domains span residues 29–95 (CQII…PSRC) and 97–158 (RICS…HCQV). 3 disulfide bridges follow: cysteine 99/cysteine 144, cysteine 130/cysteine 156, and cysteine 219/cysteine 245. Serine 246, serine 269, histidine 286, and tyrosine 366 together coordinate 4-aminobutanoate. A disulfide bond links cysteine 375 and cysteine 409. Residues asparagine 408 and asparagine 439 are each glycosylated (N-linked (GlcNAc...) asparagine). Residue glutamate 465 coordinates 4-aminobutanoate. N-linked (GlcNAc...) asparagine glycans are attached at residues asparagine 481, asparagine 501, and asparagine 513. The chain crosses the membrane as a helical span at residues 591–611 (FISVSVLSSLGIVLAVVCLSF). Residues 612–630 (NIYNSHVRYIQNSQPNLNN) lie on the Cytoplasmic side of the membrane. A helical membrane pass occupies residues 631–651 (LTAVGCSLALAAVFPLGLDGY). Residues 652-666 (HIGRSQFPFVCQARL) lie on the Extracellular side of the membrane. A helical transmembrane segment spans residues 667 to 687 (WLLGLGFSLGYGSMFTKIWWV). The Cytoplasmic segment spans residues 688 to 709 (HTVFTKKEEKKEWRKTLEPWKL). Residues 710–730 (YATVGLLVGMDVLTLAIWQIV) traverse the membrane as a helical segment. Over 731–767 (DPLHRTIETFAKEEPKEDIDVSILPQLEHCSSKKMNT) the chain is Extracellular. The chain crosses the membrane as a helical span at residues 768–788 (WLGIFYGYKGLLLLLGIFLAY). At 789–803 (ETKSVSTEKINDHRA) the chain is on the cytoplasmic side. Residues 804 to 824 (VGMAIYNVAVLCLITAPVTMI) traverse the membrane as a helical segment. Topologically, residues 825-832 (LSSQQDAA) are extracellular. The helical transmembrane segment at 833–853 (FAFASLAIVFSSYITLVVLFV) threads the bilayer. The Cytoplasmic segment spans residues 854–960 (PKMRRLITRG…DGSRVHLLYK (107 aa)). Polar residues predominate over residues 866-879 (QSETQDTMKTGSST). Disordered regions lie at residues 866–891 (QSET…RLLE) and 908–960 (VSEL…LLYK). Residues 870 to 924 (QDTMKTGSSTNNNEEEKSRLLEKENRELEKIIAEKEERVSELRHQLQSRQQLRSR) are a coiled coil. The residue at position 872 (threonine 872) is a Phosphothreonine. Residues 887-915 (SRLLEKENRELEKIIAEKEERVSELRHQL) are interaction with ATF4. Threonine 929 carries the post-translational modification Phosphothreonine.

It belongs to the G-protein coupled receptor 3 family. GABA-B receptor subfamily. As to quaternary structure, heterodimer of GABBR1 and GABBR2. Homodimers may form, but are inactive. Interacts (via C-terminus) with ATF4 (via leucine zipper domain). Interacts with JAKMIP1. Ubiquitously expressed in tissues including the forebrain, cerebellum, eye, atrium, ventricle, lung, stomach, small intestine, colon, liver, spleen, kidney, urinary bladder and skeletal muscle. Expressed at low levels in testis, and more highly in brain regions. Expression is high the brain regions including cerebral cortical layers, with higher expression in VIb than in the II-V layers, pyramidal CA1-CA3 cell layers and granular cell layers of the hippocampus, granular cell layers of the dentate gyrus, including the caudate, putamen, nucleus accumbens and olfactory tubercle, the granular layer cell layers of the medial habenula, in the cerebellum, predominantly in Purkinje cells, and in the granule cell layer. Also expressed in areas of the brain including the medial geniculate nucleus, substantia nigra, pars compacta, the ventral tegmental area, and in several thalamic, amygdaloid and hypothalamic nuclei, such as the arcuate nucleus of the hypothalamus and mammilary bodies of the hypothalamus. Expressed in the amacrine cell of the retina. As to expression, expressed in the brain, spinal cord, stomach, testis, adrenal gland, pituitary, spleen and prostate. In terms of tissue distribution, expressed in the brain, spinal cord, stomach, testis, kidney and liver. Ubiquitously expressed. As to expression, expressed in the forebrain, cerebellum, eye, kidney and urinary bladder. In terms of tissue distribution, ubiquitously expressed with high expression in the pyramidal CA1-CA3 cell layers of the hippocampus, the granule cell layers of the dentate gyrus and olfactory tubercle, the whole cortex, and Purkinje cells of the cerebellum. Moderate expression in the granule cell layer of the cerebellum.

The protein localises to the cell membrane. It is found in the postsynaptic cell membrane. It localises to the cell projection. Its subcellular location is the dendrite. The protein resides in the perikaryon. In terms of biological role, component of a heterodimeric G-protein coupled receptor for GABA, formed by GABBR1 and GABBR2. Within the heterodimeric GABA receptor, only GABBR1 seems to bind agonists, while GABBR2 mediates coupling to G proteins. Ligand binding causes a conformation change that triggers signaling via guanine nucleotide-binding proteins (G proteins) and modulates the activity of down-stream effectors, such as adenylate cyclase. Signaling inhibits adenylate cyclase, stimulates phospholipase A2, activates potassium channels, inactivates voltage-dependent calcium-channels and modulates inositol phospholipid hydrolysis. Calcium is required for high affinity binding to GABA. Plays a critical role in the fine-tuning of inhibitory synaptic transmission. Pre-synaptic GABA receptor inhibits neurotransmitter release by down-regulating high-voltage activated calcium channels, whereas postsynaptic GABA receptor decreases neuronal excitability by activating a prominent inwardly rectifying potassium (Kir) conductance that underlies the late inhibitory postsynaptic potentials. Not only implicated in synaptic inhibition but also in hippocampal long-term potentiation, slow wave sleep, muscle relaxation and antinociception. The protein is Gamma-aminobutyric acid type B receptor subunit 1 (Gabbr1) of Rattus norvegicus (Rat).